Reading from the N-terminus, the 469-residue chain is MEHHQPEDPAPGKAGTVEADIPKNHEVLAGPYEHPQDTDARDADGEAGEREPADQALLPSQCGDNLESPLPEAGSAPPGPTLGTLPEVETIKACSMPQELPQSPRTRQPEPDFYCVKWIPWKGERTPIITQSTNGPCPLLAIMNILFLQWKVKLPPQKEVITSDELMAHLGNCLLSIKPQEKSEGLQLNFQQNVDDAMTVLPKLATGLDVNARFTGVSDFEYTPECSVFDLLGIPLYHGWLVDPQSPEAVRAVGKLSYNQLVERIITCKHSSDTNLVTKGLVAEQFLETTAAQLTYHGLCELTAAAKEGELSVFFRNNHFSTMTKHKSHLYLLVTDQGFLQEEQIVWESLHNVDGDSCFCDSDFHLSHSLGKGPGAEGGSGSPEKQLQVDQDYLIALSLQQQQPRGTLGLTDLELAQQLQQEEYQQQQAAQPVWMRTRALSPQGRGATSGRPAGERRQRPKHESDCILL.

The segment at Met1–Leu85 is disordered. A compositionally biased stretch (basic and acidic residues) spans His34 to Ala53. Position 103 is a phosphoserine (Ser103). Catalysis depends on Cys137, which acts as the Nucleophile. The active-site Proton acceptor is His319. The tract at residues Gln388 to Gln426 is ubiquitin-binding domain (UBD). The interval Gln428–Leu469 is disordered. Ser441 is modified (phosphoserine). The span at Ala453–Leu469 shows a compositional bias: basic and acidic residues.

It belongs to the MINDY deubiquitinase family. FAM63 subfamily.

The catalysed reaction is Thiol-dependent hydrolysis of ester, thioester, amide, peptide and isopeptide bonds formed by the C-terminal Gly of ubiquitin (a 76-residue protein attached to proteins as an intracellular targeting signal).. Functionally, hydrolase that can specifically remove 'Lys-48'-linked conjugated ubiquitin from proteins. Has exodeubiquitinase activity and has a preference for long polyubiquitin chains. May play a regulatory role at the level of protein turnover. This Pongo abelii (Sumatran orangutan) protein is Ubiquitin carboxyl-terminal hydrolase MINDY-1 (MINDY1).